A 319-amino-acid chain; its full sequence is Nuclear hormone receptor family member nhr-174 (319 aa).

The segment at residues 7 to 81 (DPVCPVCEFP…AGMKRNLVRQ (75 aa)) is a DNA-binding region (nuclear receptor). NR C4-type zinc fingers lie at residues 10–31 (CPVC…CGAC) and 47–63 (CEKK…CRAC). The region spanning 130–319 (EAEKDVSKIL…SMKKSRYLQF (190 aa)) is the NR LBD domain.

It belongs to the nuclear hormone receptor family.

It is found in the nucleus. Its function is as follows. Orphan nuclear receptor. This chain is Nuclear hormone receptor family member nhr-174 (nhr-174), found in Caenorhabditis elegans.